Reading from the N-terminus, the 244-residue chain is Small ribosomal subunit protein uS3 (244 aa).

The KH type-2 domain occupies 39-107 (VREMLRKKLA…PAHINVTEVR (69 aa)). The disordered stretch occupies residues 213-244 (VGQEKQDDSPRNDRNDRGDRGDRPSRPAREAR). Basic and acidic residues predominate over residues 216 to 244 (EKQDDSPRNDRNDRGDRGDRPSRPAREAR).

This sequence belongs to the universal ribosomal protein uS3 family. As to quaternary structure, part of the 30S ribosomal subunit. Forms a tight complex with proteins S10 and S14.

Its function is as follows. Binds the lower part of the 30S subunit head. Binds mRNA in the 70S ribosome, positioning it for translation. The polypeptide is Small ribosomal subunit protein uS3 (Xanthomonas axonopodis pv. citri (strain 306)).